The sequence spans 206 residues: Ribonuclease HII (206 aa).

The RNase H type-2 domain maps to 22-206 (RFICGVDEAG…ISFLKNILSL (185 aa)). Positions 28, 29, and 120 each coordinate a divalent metal cation.

This sequence belongs to the RNase HII family. Requires Mn(2+) as cofactor. Mg(2+) serves as cofactor.

It localises to the cytoplasm. The catalysed reaction is Endonucleolytic cleavage to 5'-phosphomonoester.. In terms of biological role, endonuclease that specifically degrades the RNA of RNA-DNA hybrids. In Caldicellulosiruptor bescii (strain ATCC BAA-1888 / DSM 6725 / KCTC 15123 / Z-1320) (Anaerocellum thermophilum), this protein is Ribonuclease HII.